A 98-amino-acid polypeptide reads, in one-letter code: Sarcosine oxidase subunit delta (98 aa).

Residues C6, C9, H59, and C63 each coordinate Zn(2+).

Belongs to the SoxD family. As to quaternary structure, heterotetramer composed of subunits alpha (SoxA), beta (SoxB), gamma (SoxG) and delta (SoxD).

It is found in the cytoplasm. The catalysed reaction is sarcosine + (6S)-5,6,7,8-tetrahydrofolate + O2 = (6R)-5,10-methylene-5,6,7,8-tetrahydrofolate + glycine + H2O2. It carries out the reaction sarcosine + O2 + H2O = formaldehyde + glycine + H2O2. In terms of biological role, in the presence of tetrahydrofolate, catalyzes the oxidative demethylation of sarcosine to yield glycine, 5,10-methylenetetrahydrofolate and hydrogen peroxide. In the absence of tetrahydrofolate, catalyzes the oxidative demethylation of sarcosine to yield glycine, formaldehyde and hydrogen peroxide. The sequence is that of Sarcosine oxidase subunit delta from Corynebacterium sp. (strain P-1).